The primary structure comprises 1438 residues: DNA polymerase III PolC-type (1438 aa).

The region spanning tyrosine 422–phenylalanine 578 is the Exonuclease domain.

The protein belongs to the DNA polymerase type-C family. PolC subfamily.

It is found in the cytoplasm. It carries out the reaction DNA(n) + a 2'-deoxyribonucleoside 5'-triphosphate = DNA(n+1) + diphosphate. Its function is as follows. Required for replicative DNA synthesis. This DNA polymerase also exhibits 3' to 5' exonuclease activity. This Staphylococcus aureus (strain bovine RF122 / ET3-1) protein is DNA polymerase III PolC-type.